Here is a 169-residue protein sequence, read N- to C-terminus: Peptide deformylase (169 aa).

Fe cation contacts are provided by C91 and H133. E134 is a catalytic residue. H137 is a Fe cation binding site.

This sequence belongs to the polypeptide deformylase family. The cofactor is Fe(2+).

The enzyme catalyses N-terminal N-formyl-L-methionyl-[peptide] + H2O = N-terminal L-methionyl-[peptide] + formate. Functionally, removes the formyl group from the N-terminal Met of newly synthesized proteins. Requires at least a dipeptide for an efficient rate of reaction. N-terminal L-methionine is a prerequisite for activity but the enzyme has broad specificity at other positions. In Klebsiella pneumoniae subsp. pneumoniae (strain ATCC 700721 / MGH 78578), this protein is Peptide deformylase.